Here is a 403-residue protein sequence, read N- to C-terminus: Phosphoglycerate kinase (403 aa).

Residues Asp21 to Asn23, Arg37, His60 to Arg63, Arg125, and Arg158 each bind substrate. Residues Lys209, Glu332, and Gly359–Ser362 each bind ATP.

It belongs to the phosphoglycerate kinase family. As to quaternary structure, monomer.

It localises to the cytoplasm. The enzyme catalyses (2R)-3-phosphoglycerate + ATP = (2R)-3-phospho-glyceroyl phosphate + ADP. The protein operates within carbohydrate degradation; glycolysis; pyruvate from D-glyceraldehyde 3-phosphate: step 2/5. The chain is Phosphoglycerate kinase from Koribacter versatilis (strain Ellin345).